The primary structure comprises 386 residues: Ovalbumin (386 aa).

The residue at position 2 (G2) is an N-acetylglycine. A signal peptide (not cleaved) is located at residues 22–48 (HHANENIFYCPIAIMSALAMVYLGAKD). At S69 the chain carries Phosphoserine. C74 and C121 are joined by a disulfide. Ca(2+) is bound at residue E192. N293 carries N-linked (GlcNAc...) asparagine glycosylation. Position 345 is a phosphoserine (S345).

Belongs to the serpin family. Ov-serpin subfamily. As to quaternary structure, homodimer. Undergoes proteolytic cleavage first at the canonical P1-P1' site, and then at the P8-P7 site by subtilisin. In terms of tissue distribution, major protein of egg white. Expressed in the magnum of the oviduct (at protein level).

It localises to the secreted. In terms of biological role, non-inhibitory serpin. Storage protein of egg white. The sequence is that of Ovalbumin (SERPINB14) from Gallus gallus (Chicken).